Reading from the N-terminus, the 498-residue chain is TORTIFOLIA1-like protein 5 (498 aa).

HEAT repeat units lie at residues Glu-56 to Asp-93, Pro-97 to Gly-134, Pro-136 to Glu-173, Glu-177 to Gly-214, and Lys-219 to Glu-257. Positions Glu-296–Glu-423 are disordered. Residues Thr-300 to Lys-322 are compositionally biased toward low complexity. Over residues Asn-343–Glu-366 the composition is skewed to basic and acidic residues. Over residues Asn-390–Ser-400 the composition is skewed to polar residues. Ser-426 bears the Phosphoserine mark.

In Arabidopsis thaliana (Mouse-ear cress), this protein is TORTIFOLIA1-like protein 5.